Here is a 304-residue protein sequence, read N- to C-terminus: Probable intron-encoded endonuclease 1 (304 aa).

The 92-residue stretch at 84–175 (DKGGIYSFIN…RFNFDNLYNF (92 aa)) folds into the GIY-YIG domain.

It to endonucleases of group I introns of fungi and phage.

It is found in the mitochondrion. Its function is as follows. Mitochondrial DNA endonuclease involved in intron homing. This chain is Probable intron-encoded endonuclease 1, found in Neurospora crassa (strain ATCC 24698 / 74-OR23-1A / CBS 708.71 / DSM 1257 / FGSC 987).